Reading from the N-terminus, the 232-residue chain is Triosephosphate isomerase (232 aa).

6–8 (NFK) contributes to the substrate binding site. Residue H90 is the Electrophile of the active site. The Proton acceptor role is filled by E159. Substrate-binding residues include G165 and S195.

Belongs to the triosephosphate isomerase family. In terms of assembly, homodimer.

Its subcellular location is the cytoplasm. The enzyme catalyses D-glyceraldehyde 3-phosphate = dihydroxyacetone phosphate. Its pathway is carbohydrate biosynthesis; gluconeogenesis. The protein operates within carbohydrate degradation; glycolysis; D-glyceraldehyde 3-phosphate from glycerone phosphate: step 1/1. Its function is as follows. Involved in the gluconeogenesis. Catalyzes stereospecifically the conversion of dihydroxyacetone phosphate (DHAP) to D-glyceraldehyde-3-phosphate (G3P). The sequence is that of Triosephosphate isomerase from Wolinella succinogenes (strain ATCC 29543 / DSM 1740 / CCUG 13145 / JCM 31913 / LMG 7466 / NCTC 11488 / FDC 602W) (Vibrio succinogenes).